The chain runs to 639 residues: Serine/threonine-protein phosphatase 2B catalytic subunit A1 (639 aa).

Fe cation is bound by residues D120, H122, and D148. Zn(2+) is bound by residues D148 and N180. H181 serves as the catalytic Proton donor. Zn(2+) is bound by residues H229 and H311. The segment covering 494-503 (KSDIENERLP) has biased composition (basic and acidic residues). A disordered region spans residues 494–602 (KSDIENERLP…PSTRRRSLEN (109 aa)). 2 stretches are compositionally biased toward low complexity: residues 515-527 (ASPSASPIMPATP) and 546-572 (TPISSAIASGSPGSPGTPTSPSIGGPP).

It belongs to the PPP phosphatase family. PP-2B subfamily. As to quaternary structure, composed of two components (A and B), the A component is the catalytic subunit and the B component confers calcium sensitivity. Fe(3+) is required as a cofactor. It depends on Zn(2+) as a cofactor.

It carries out the reaction O-phospho-L-seryl-[protein] + H2O = L-seryl-[protein] + phosphate. The enzyme catalyses O-phospho-L-threonyl-[protein] + H2O = L-threonyl-[protein] + phosphate. In terms of biological role, calcium-dependent, calmodulin-stimulated protein phosphatase. This subunit may have a role in the calmodulin activation of calcineurin. This chain is Serine/threonine-protein phosphatase 2B catalytic subunit A1 (CNA1), found in Cryptococcus neoformans var. grubii serotype A (strain H99 / ATCC 208821 / CBS 10515 / FGSC 9487) (Filobasidiella neoformans var. grubii).